The sequence spans 694 residues: ATP-binding cassette sub-family G member 8 (694 aa).

Over 1-437 (MAEKTKEETQ…ISNDFRDLPT (437 aa)) the chain is Cytoplasmic. One can recognise an ABC transporter domain in the interval 91-335 (AQFKLPWRSR…FTSIGYPCPR (245 aa)). Residues 436 to 684 (PTLFIHGAEA…FLSLYYLSLK (249 aa)) enclose the ABC transmembrane type-2 domain. A helical membrane pass occupies residues 438–458 (LFIHGAEACLMSLIIGFLYYG). Residues 459-468 (HADKPLSFMD) are Extracellular-facing. The chain crosses the membrane as a helical span at residues 469–489 (MAALLFMIGALIPFNVILDVV). The Cytoplasmic segment spans residues 490–518 (SKCHSERSLLYYELEDGLYTAGPYFFAKV). Residues 519–539 (LGELPEHCAYVIIYGMPIYWL) form a helical membrane-spanning segment. Topologically, residues 540 to 548 (TNLRPGPEL) are extracellular. A helical membrane pass occupies residues 549-569 (FLLHFMLLWLVVFCCRTMALA). At 570–576 (ASAMLPT) the chain is on the cytoplasmic side. The chain crosses the membrane as a helical span at residues 577 to 597 (FHMSSFCCNALYNSFYLTAGF). Residues 598–660 (MINLNNLWIV…VTAMDLNSHP (63 aa)) lie on the Extracellular side of the membrane. N640 carries N-linked (GlcNAc...) asparagine glycosylation. A helical membrane pass occupies residues 661–681 (LYAIYLIVIGISCGFLSLYYL). The Cytoplasmic portion of the chain corresponds to 682–694 (SLKFIKQKSIQDW).

The protein belongs to the ABC transporter superfamily. ABCG family. Eye pigment precursor importer (TC 3.A.1.204) subfamily. As to quaternary structure, heterodimer with ABCG8. Requires Mg(2+) as cofactor. N-glycosylated. N-glycosylation is important for efficient export out of the endoplasmic reticulum. Highest expression in liver, with lower levels in small intestine and colon.

The protein resides in the cell membrane. It localises to the apical cell membrane. It carries out the reaction cholesterol(in) + ATP + H2O = cholesterol(out) + ADP + phosphate + H(+). The catalysed reaction is sitosterol(in) + ATP + H2O = sitosterol(out) + ADP + phosphate + H(+). Functionally, ABCG5 and ABCG8 form an obligate heterodimer that mediates Mg(2+)- and ATP-dependent sterol transport across the cell membrane. Plays an essential role in the selective transport of the dietary cholesterol in and out of the enterocytes and in the selective sterol excretion by the liver into bile. Required for normal sterol homeostasis. The heterodimer with ABCG5 has ATPase activity. This chain is ATP-binding cassette sub-family G member 8, found in Rattus norvegicus (Rat).